We begin with the raw amino-acid sequence, 264 residues long: NADH-quinone oxidoreductase subunit I 2 (264 aa).

2 4Fe-4S ferredoxin-type domains span residues 57 to 86 (GFLE…ISLE) and 98 to 127 (TQFD…HTRE). [4Fe-4S] cluster-binding residues include Cys66, Cys69, Cys72, Cys76, Cys107, Cys110, Cys113, and Cys117. Residues 183-264 (APQFLPPEPP…AAPAANPESK (82 aa)) are disordered. A compositionally biased stretch (low complexity) spans 197–264 (AKPAAKAAPA…AAPAANPESK (68 aa)).

This sequence belongs to the complex I 23 kDa subunit family. NDH-1 is composed of 14 different subunits. Subunits NuoA, H, J, K, L, M, N constitute the membrane sector of the complex. The cofactor is [4Fe-4S] cluster.

The protein resides in the cell inner membrane. It catalyses the reaction a quinone + NADH + 5 H(+)(in) = a quinol + NAD(+) + 4 H(+)(out). Its function is as follows. NDH-1 shuttles electrons from NADH, via FMN and iron-sulfur (Fe-S) centers, to quinones in the respiratory chain. The immediate electron acceptor for the enzyme in this species is believed to be ubiquinone. Couples the redox reaction to proton translocation (for every two electrons transferred, four hydrogen ions are translocated across the cytoplasmic membrane), and thus conserves the redox energy in a proton gradient. This is NADH-quinone oxidoreductase subunit I 2 from Anaeromyxobacter dehalogenans (strain 2CP-C).